The sequence spans 421 residues: Imidazolonepropionase (421 aa).

Residues His81 and His83 each coordinate Fe(3+). Zn(2+)-binding residues include His81 and His83. Residues Arg90, Tyr153, and His186 each coordinate 4-imidazolone-5-propanoate. Tyr153 serves as a coordination point for N-formimidoyl-L-glutamate. His251 serves as a coordination point for Fe(3+). His251 provides a ligand contact to Zn(2+). Glu254 is a 4-imidazolone-5-propanoate binding site. Asp326 contacts Fe(3+). Zn(2+) is bound at residue Asp326. N-formimidoyl-L-glutamate is bound by residues Asn328 and Gly330. A 4-imidazolone-5-propanoate-binding site is contributed by Ser331.

It belongs to the metallo-dependent hydrolases superfamily. HutI family. It depends on Zn(2+) as a cofactor. Requires Fe(3+) as cofactor.

The protein localises to the cytoplasm. The enzyme catalyses 4-imidazolone-5-propanoate + H2O = N-formimidoyl-L-glutamate. It functions in the pathway amino-acid degradation; L-histidine degradation into L-glutamate; N-formimidoyl-L-glutamate from L-histidine: step 3/3. Catalyzes the hydrolytic cleavage of the carbon-nitrogen bond in imidazolone-5-propanoate to yield N-formimidoyl-L-glutamate. It is the third step in the universal histidine degradation pathway. In Streptococcus pyogenes serotype M12 (strain MGAS2096), this protein is Imidazolonepropionase.